We begin with the raw amino-acid sequence, 332 residues long: 2,3-diketo-L-gulonate reductase (332 aa).

Catalysis depends on H44, which acts as the Proton donor. NAD(+) contacts are provided by residues 168 to 174 (ITMVDMS), 224 to 225 (WK), and 304 to 306 (GHE).

This sequence belongs to the LDH2/MDH2 oxidoreductase family. DlgD subfamily. In terms of assembly, homodimer.

It localises to the cytoplasm. It carries out the reaction 3-dehydro-L-gulonate + NAD(+) = 2,3-dioxo-L-gulonate + NADH + H(+). The enzyme catalyses 3-dehydro-L-gulonate + NADP(+) = 2,3-dioxo-L-gulonate + NADPH + H(+). In terms of biological role, catalyzes the reduction of 2,3-diketo-L-gulonate in the presence of NADH, to form 3-keto-L-gulonate. The sequence is that of 2,3-diketo-L-gulonate reductase from Escherichia coli O139:H28 (strain E24377A / ETEC).